We begin with the raw amino-acid sequence, 68 residues long: ATP synthase subunit c (68 aa).

Helical transmembrane passes span 4 to 24 (IAAAIAIGLSALGAGIGNGLI) and 45 to 65 (IMFIGIGLVEALPIIGVVIAF).

It belongs to the ATPase C chain family. As to quaternary structure, F-type ATPases have 2 components, F(1) - the catalytic core - and F(0) - the membrane proton channel. F(1) has five subunits: alpha(3), beta(3), gamma(1), delta(1), epsilon(1). F(0) has three main subunits: a(1), b(2) and c(10-14). The alpha and beta chains form an alternating ring which encloses part of the gamma chain. F(1) is attached to F(0) by a central stalk formed by the gamma and epsilon chains, while a peripheral stalk is formed by the delta and b chains.

It is found in the cell membrane. Its function is as follows. F(1)F(0) ATP synthase produces ATP from ADP in the presence of a proton or sodium gradient. F-type ATPases consist of two structural domains, F(1) containing the extramembraneous catalytic core and F(0) containing the membrane proton channel, linked together by a central stalk and a peripheral stalk. During catalysis, ATP synthesis in the catalytic domain of F(1) is coupled via a rotary mechanism of the central stalk subunits to proton translocation. Functionally, key component of the F(0) channel; it plays a direct role in translocation across the membrane. A homomeric c-ring of between 10-14 subunits forms the central stalk rotor element with the F(1) delta and epsilon subunits. In Staphylococcus saprophyticus subsp. saprophyticus (strain ATCC 15305 / DSM 20229 / NCIMB 8711 / NCTC 7292 / S-41), this protein is ATP synthase subunit c.